The sequence spans 89 residues: Phosphocarrier protein HPr (89 aa).

The HPr domain maps to 1–88; that stretch reads MLKQSIEIIN…DLINGYFGEG (88 aa). Histidine 15 (pros-phosphohistidine intermediate) is an active-site residue. Serine 46 is subject to Phosphoserine; by HPrK/P.

Belongs to the HPr family.

It is found in the cytoplasm. With respect to regulation, phosphorylation on Ser-46 inhibits the phosphoryl transfer from enzyme I to HPr. Its function is as follows. General (non sugar-specific) component of the phosphoenolpyruvate-dependent sugar phosphotransferase system (sugar PTS). This major carbohydrate active-transport system catalyzes the phosphorylation of incoming sugar substrates concomitantly with their translocation across the cell membrane. The phosphoryl group from phosphoenolpyruvate (PEP) is transferred to the phosphoryl carrier protein HPr by enzyme I. Phospho-HPr then transfers it to the PTS EIIA domain. This chain is Phosphocarrier protein HPr (ptsH), found in Neisseria meningitidis serogroup A / serotype 4A (strain DSM 15465 / Z2491).